The chain runs to 1849 residues: UPF0606 protein KIAA1549L (1849 aa).

The span at 1–10 (MDHTASQNAQ) shows a compositional bias: polar residues. Disordered regions lie at residues 1–70 (MDHT…LLQL), 142–166 (ATAN…PALS), 213–242 (PTEN…PATR), and 529–586 (RHSV…ERNA). 2 stretches are compositionally biased toward polar residues: residues 529–541 (RHSV…QLPN) and 552–586 (PGPT…ERNA). The stretch at 958-986 (KFAQTMEQRLQKAFQDAERKVLNTKSNLT) forms a coiled coil. The helical transmembrane segment at 1180–1200 (LWIIAAVLAPIAVVTVIIIII) threads the bilayer. 4 disordered regions span residues 1258–1338 (LPIR…EEEG), 1460–1546 (SKNR…SQPS), 1656–1679 (RSTS…AQLH), and 1769–1819 (SRYP…APLT). Polar residues-rich tracts occupy residues 1290-1319 (PSEN…AQQK), 1463-1482 (RQQM…SPSP), and 1537-1546 (ETSTLSSQPS). 2 stretches are compositionally biased toward low complexity: residues 1769-1786 (SRYP…YSQP) and 1795-1809 (QAPA…QSLA).

The protein belongs to the UPF0606 family.

The protein localises to the membrane. The sequence is that of UPF0606 protein KIAA1549L (KIAA1549L) from Homo sapiens (Human).